The chain runs to 1104 residues: Ankyrin repeat- and BTB/POZ domain-containing protein 3 (1104 aa).

A helical membrane pass occupies residues I168–L188. The interval S260–C301 is disordered. A compositionally biased stretch (gly residues) spans P264 to S276. ANK repeat units follow at residues Q603–V632, R649–G678, Y687–I716, G730–S759, and T825–E854. One can recognise a BTB domain in the interval S923–L989.

Its subcellular location is the membrane. The polypeptide is Ankyrin repeat- and BTB/POZ domain-containing protein 3 (Homo sapiens (Human)).